The sequence spans 204 residues: N-(5'-phosphoribosyl)anthranilate isomerase (204 aa).

The protein belongs to the TrpF family.

It carries out the reaction N-(5-phospho-beta-D-ribosyl)anthranilate = 1-(2-carboxyphenylamino)-1-deoxy-D-ribulose 5-phosphate. It participates in amino-acid biosynthesis; L-tryptophan biosynthesis; L-tryptophan from chorismate: step 3/5. The sequence is that of N-(5'-phosphoribosyl)anthranilate isomerase from Bacillus cereus (strain AH820).